The following is a 295-amino-acid chain: Indole-3-glycerol phosphate synthase (295 aa).

Belongs to the TrpC family.

The enzyme catalyses 1-(2-carboxyphenylamino)-1-deoxy-D-ribulose 5-phosphate + H(+) = (1S,2R)-1-C-(indol-3-yl)glycerol 3-phosphate + CO2 + H2O. It participates in amino-acid biosynthesis; L-tryptophan biosynthesis; L-tryptophan from chorismate: step 4/5. The chain is Indole-3-glycerol phosphate synthase from Synechococcus sp. (strain ATCC 27144 / PCC 6301 / SAUG 1402/1) (Anacystis nidulans).